The sequence spans 224 residues: UPF0758 protein IL0240 (224 aa).

Positions 102 to 224 constitute an MPN domain; sequence GFTEPTMVKD…PISFAERGLL (123 aa). Zn(2+)-binding residues include histidine 173, histidine 175, and aspartate 186. Positions 173-186 match the JAMM motif motif; that stretch reads HNHPSGVAEPSQAD.

This sequence belongs to the UPF0758 family.

In Idiomarina loihiensis (strain ATCC BAA-735 / DSM 15497 / L2-TR), this protein is UPF0758 protein IL0240.